The following is a 564-amino-acid chain: Putative ABC transporter ATP-binding protein PBPRA2240 (564 aa).

2 ABC transporter domains span residues 3 to 244 (IEFS…GIRE) and 299 to 533 (LTVN…ANLT). Residues 37–44 (GPSGSGKS) and 332–339 (GKNGSGKS) each bind ATP.

It belongs to the ABC transporter superfamily.

It is found in the cell inner membrane. In terms of biological role, probably part of an ABC transporter complex. Responsible for energy coupling to the transport system. The protein is Putative ABC transporter ATP-binding protein PBPRA2240 of Photobacterium profundum (strain SS9).